A 785-amino-acid polypeptide reads, in one-letter code: Endonuclease MutS2 (785 aa).

ATP is bound at residue 332-339 (GPNTGGKT). The Smr domain occupies 710-785 (IDLRGLDAEE…GDGATIVELK (76 aa)).

The protein belongs to the DNA mismatch repair MutS family. MutS2 subfamily. As to quaternary structure, homodimer. Binds to stalled ribosomes, contacting rRNA.

Endonuclease that is involved in the suppression of homologous recombination and thus may have a key role in the control of bacterial genetic diversity. Its function is as follows. Acts as a ribosome collision sensor, splitting the ribosome into its 2 subunits. Detects stalled/collided 70S ribosomes which it binds and splits by an ATP-hydrolysis driven conformational change. Acts upstream of the ribosome quality control system (RQC), a ribosome-associated complex that mediates the extraction of incompletely synthesized nascent chains from stalled ribosomes and their subsequent degradation. Probably generates substrates for RQC. In Clostridium botulinum (strain Alaska E43 / Type E3), this protein is Endonuclease MutS2.